The primary structure comprises 106 residues: uncharacterized protein (106 aa).

Disordered stretches follow at residues 27–47 and 83–106; these read FSDS…DVSD and SPAM…VQSK. A compositionally biased stretch (acidic residues) spans 29-39; the sequence is DSEDEPDDEAS. A compositionally biased stretch (basic and acidic residues) spans 94 to 106; sequence GIEREDRGGVQSK.

It localises to the mitochondrion. This is an uncharacterized protein from Arabidopsis thaliana (Mouse-ear cress).